The chain runs to 1571 residues: MNSIESSSNDSNEINKNSNKNNTHLNSNYNNIYKNNSTSSNNNNNHNNIEIIGIDNNKNNNKNNNDNNNNNNNIDKKRKDSKNKQNQEINQEMSENKKIYNSNDSNCSSGSSSGGHVNNGHHILIEENERLEHENQEIQEIYKQKGMEFQKKDLRFGYDVNSNNNNNNGGGSSSGSSSGGSDESASNQPIIRTRNREGSILNLKKQGLVKEISQRFQTPDTASYTRPNANNISIKDKISILKKEQERRKQDSEVQQREKVIVLSADSSNIQIYHPSVLIEKMNSKLDTEEKPATTTTTTTTTSTSISTSTPTTTTTTTTNTSTTNDITIKPKTSPTKNNEERSQSPITTPKQPVEEIVKKVSTPKSNNTSKKTSSDTTPTGKTTKKDKKDKKDKSRDSGNLVIVNNTNNTSSNNNNNNNNNNNNETIIKRRGRVLVTPSSDLKKNIQIYFTIPINPPVNKTNKPNQLLSNTSQQFLKTLISNEIPIDCKINDINDTDAFSDLSASASSSSFITKSSQSLLNVQSLRVKAIKTSFNILFLMPNQSKKILQVKGSDTIENLKERIISDYLFNNNSNNNNNNCKYGADSYLILDFNDNPMERSLVLNKSDYILDKRAQGLIPKLKVIEKSTILDSDPSDELSPSEYEIIRKLIPGTDTWRGEEVEYFRRVTSRLRYEALPLIKGSIQSTLLVRLSPLPIPIVGNKILISIFLPITQVTKTLDLELNETADQFTNRLFTKNYSKHLPNVNSNDFILKVVGSSDFIHGPHDIRTFESIRNHIIQGTKPQLTLIQRPKPELDPQPFKPRFDYPPELIIDHSCSNAINCNNNNTNSTNNNNINFDNWDQITHISIREIKKPFRVKVMGSTRIPLSCIKDIDSSSVIVSISLYHGIECFSKAFTQPIIPPPFAFLAETLSVDWCEWLVFTNIDYSNLPVDARLSISVYSANETVDDVEEIKNLDEATKKLTPIGWINVMITDFKYQLRQGMVELSLWPSDFSNPLGTCSNNPSSSQSVGLTLEFEEFNLPVLFPRKTKFSTSVSVIEQPPTNINSNEMREFFEQITALDPLSDLKQEKYNQLWTLRHYSILFPQVLPRLMLSVPWTQATAVDEAISLLDRWPKLKPYESLELLDAKHANRKVREFAVTCLEDLSEDELLDILLQLVQVLKYEPFHDSKLSRFLLRKAILNRNIGHSFFWYLKSDLHDSNLSERFGILLESYLYACGAHRIELLKQMEVINNLTEVAKKIKPLKDQDRREFMIKEFESLEWPKRFHLTLNPRFESNGLIINKSKYMDSKKLPLRLSFTNTDMNADPIEVIFKAGDDLRQDMLTLQMIRLMDKLWQKEGLDLKLSPYGCISTGDMIGMIEVVLNSETTAKIQKSEGGGAASAFKLDPLANWILQHNKSDMEYQKAVDTFILSCAGYCVATYVLGIGDRHNDNLMVTKGGRLFHIDFGHFLGNYKKKFGFKRERAPFVFTPDFCYVMGGKESFKFSQFVNYCCTAYNIVRKNAKLFMNLFAMMVSTGIPELQSMEDLNYLKESFSIELSDEKAREKFVALIHESLATKTTQLNNFFHHLAHA.

Over residues 1-73 the composition is skewed to low complexity; that stretch reads MNSIESSSND…NNDNNNNNNN (73 aa). Disordered stretches follow at residues 1 to 119, 157 to 195, and 283 to 430; these read MNSI…HVNN, GYDVNSNNNNNNGGGSSSGSSSGGSDESASNQPIIRTRN, and NSKL…IIKR. Positions 74-85 are enriched in basic and acidic residues; the sequence is IDKKRKDSKNKQ. A compositionally biased stretch (low complexity) spans 101-119; it reads NSNDSNCSSGSSSGGHVNN. Basic and acidic residues predominate over residues 283-292; the sequence is NSKLDTEEKP. Residues 294 to 324 show a composition bias toward low complexity; the sequence is TTTTTTTTTSTSISTSTPTTTTTTTTNTSTT. Over residues 325-337 the composition is skewed to polar residues; the sequence is NDITIKPKTSPTK. Low complexity-rich tracts occupy residues 360–382 and 405–424; these read KVSTPKSNNTSKKTSSDTTPTGK and NNTNNTSSNNNNNNNNNNNN. The 98-residue stretch at 530 to 627 folds into the PI3K-ABD domain; sequence IKTSFNILFL…IPKLKVIEKS (98 aa). In terms of domain architecture, PI3K-RBD spans 700–789; it reads GNKILISIFL…GTKPQLTLIQ (90 aa). The C2 PI3K-type domain occupies 851-1020; it reads IKKPFRVKVM…GLTLEFEEFN (170 aa). A PIK helical domain is found at 1040-1216; it reads QPPTNINSNE…GILLESYLYA (177 aa). The PI3K/PI4K catalytic domain occupies 1280–1558; that stretch reads IINKSKYMDS…LIHESLATKT (279 aa). A G-loop region spans residues 1286-1292; that stretch reads YMDSKKL. Residues 1424–1432 are catalytic loop; the sequence is GIGDRHNDN. An activation loop region spans residues 1443-1469; sequence HIDFGHFLGNYKKKFGFKRERAPFVFT.

The protein belongs to the PI3/PI4-kinase family.

The catalysed reaction is a 1,2-diacyl-sn-glycero-3-phospho-(1D-myo-inositol) + ATP = a 1,2-diacyl-sn-glycero-3-phospho-(1D-myo-inositol-3-phosphate) + ADP + H(+). The sequence is that of Phosphatidylinositol 3-kinase 1 (pikA) from Dictyostelium discoideum (Social amoeba).